A 430-amino-acid polypeptide reads, in one-letter code: Enolase (430 aa).

Position 167 (glutamine 167) interacts with (2R)-2-phosphoglycerate. The Proton donor role is filled by glutamate 209. 3 residues coordinate Mg(2+): aspartate 245, glutamate 286, and aspartate 313. (2R)-2-phosphoglycerate contacts are provided by lysine 338, arginine 367, serine 368, and lysine 389. Lysine 338 (proton acceptor) is an active-site residue.

The protein belongs to the enolase family. It depends on Mg(2+) as a cofactor.

It localises to the cytoplasm. Its subcellular location is the secreted. It is found in the cell surface. It catalyses the reaction (2R)-2-phosphoglycerate = phosphoenolpyruvate + H2O. It participates in carbohydrate degradation; glycolysis; pyruvate from D-glyceraldehyde 3-phosphate: step 4/5. Functionally, catalyzes the reversible conversion of 2-phosphoglycerate (2-PG) into phosphoenolpyruvate (PEP). It is essential for the degradation of carbohydrates via glycolysis. The polypeptide is Enolase (Synechococcus sp. (strain CC9605)).